Consider the following 106-residue polypeptide: Large ribosomal subunit protein uL24 (106 aa).

This sequence belongs to the universal ribosomal protein uL24 family. Part of the 50S ribosomal subunit.

Functionally, one of two assembly initiator proteins, it binds directly to the 5'-end of the 23S rRNA, where it nucleates assembly of the 50S subunit. Its function is as follows. One of the proteins that surrounds the polypeptide exit tunnel on the outside of the subunit. In Orientia tsutsugamushi (strain Boryong) (Rickettsia tsutsugamushi), this protein is Large ribosomal subunit protein uL24.